A 357-amino-acid polypeptide reads, in one-letter code: MGSRELSLRERQVLGIIIQSYVVTAAPVGSRYIARNYSLGLSDATIRNVMADLEDEGYIHQPHTSAGRIPTDLGYRYYVDLIMKVQRIDEDEKRRMETDYGQIAMEHPGTSRDVLLSAAKVLGCISRQLSVVLSPTLSDAVFERLDMVLLSSTRMMVILSIHSLFVKTIVMELPLEVSRKMIEEVSNVINERLAGLTLSEIRRSIAHRLAGSHGDGALKDLIVRSAGSLFDESPIFERLYISGTEYIVDQPEFKQPERVRELITMIEDKFSVARLVEKSGHMSEALRPSDMDVTISIGSENSTREAEDLTIVSTPYYAGNMVGRLGILGPKRMDYEHAVRVLNYMADSLTATLTDAN.

The protein belongs to the HrcA family.

Functionally, negative regulator of class I heat shock genes (grpE-dnaK-dnaJ and groELS operons). Prevents heat-shock induction of these operons. The sequence is that of Heat-inducible transcription repressor HrcA from Chlorobium phaeovibrioides (strain DSM 265 / 1930) (Prosthecochloris vibrioformis (strain DSM 265)).